Reading from the N-terminus, the 598-residue chain is Eukaryotic translation initiation factor 3 subunit D (598 aa).

Positions 104–178 (VKTRGFGRGG…YDKPQRNRDS (75 aa)) are disordered. Over residues 109–132 (FGRGGGTIFRGRGQRGGAQRGRGG) the composition is skewed to gly residues. Over residues 165–177 (GWKDYDKPQRNRD) the composition is skewed to basic and acidic residues. The interval 304 to 318 (SIDLVTVNENAADAP) is RNA gate. The disordered stretch occupies residues 574–598 (NTFEEEDDTGAKAEKDEESEEKDEE). Residues 589–598 (DEESEEKDEE) show a composition bias toward acidic residues.

Belongs to the eIF-3 subunit D family. In terms of assembly, component of the eukaryotic translation initiation factor 3 (eIF-3) complex.

It is found in the cytoplasm. MRNA cap-binding component of the eukaryotic translation initiation factor 3 (eIF-3) complex, which is involved in protein synthesis of a specialized repertoire of mRNAs and, together with other initiation factors, stimulates binding of mRNA and methionyl-tRNAi to the 40S ribosome. The eIF-3 complex specifically targets and initiates translation of a subset of mRNAs involved in cell proliferation. In the eIF-3 complex, eif3d specifically recognizes and binds the 7-methylguanosine cap of a subset of mRNAs. This is Eukaryotic translation initiation factor 3 subunit D from Coccidioides immitis (strain RS) (Valley fever fungus).